The primary structure comprises 156 residues: Ribosomal RNA large subunit methyltransferase H (156 aa).

Residues L73, G104, and 123-128 (VSSLTL) each bind S-adenosyl-L-methionine.

Belongs to the RNA methyltransferase RlmH family. As to quaternary structure, homodimer.

It is found in the cytoplasm. The enzyme catalyses pseudouridine(1915) in 23S rRNA + S-adenosyl-L-methionine = N(3)-methylpseudouridine(1915) in 23S rRNA + S-adenosyl-L-homocysteine + H(+). Specifically methylates the pseudouridine at position 1915 (m3Psi1915) in 23S rRNA. In Paraburkholderia xenovorans (strain LB400), this protein is Ribosomal RNA large subunit methyltransferase H.